Consider the following 907-residue polypeptide: Protein translocase subunit SecA (907 aa).

ATP contacts are provided by residues Gln-87, 105–109 (GEGKT), and Asp-512. Positions 834–907 (QEDVERMEEQ…KKYKQCHGKI (74 aa)) are disordered. 2 stretches are compositionally biased toward basic and acidic residues: residues 836-853 (DVER…EAAR) and 873-888 (EEAH…KVGR). Residues Cys-892, Cys-894, Cys-903, and His-904 each coordinate Zn(2+). Over residues 898 to 907 (KKYKQCHGKI) the composition is skewed to basic residues.

It belongs to the SecA family. In terms of assembly, monomer and homodimer. Part of the essential Sec protein translocation apparatus which comprises SecA, SecYEG and auxiliary proteins SecDF-YajC and YidC. Requires Zn(2+) as cofactor.

It is found in the cell inner membrane. Its subcellular location is the cytoplasm. It catalyses the reaction ATP + H2O + cellular proteinSide 1 = ADP + phosphate + cellular proteinSide 2.. Part of the Sec protein translocase complex. Interacts with the SecYEG preprotein conducting channel. Has a central role in coupling the hydrolysis of ATP to the transfer of proteins into and across the cell membrane, serving both as a receptor for the preprotein-SecB complex and as an ATP-driven molecular motor driving the stepwise translocation of polypeptide chains across the membrane. The chain is Protein translocase subunit SecA from Aliivibrio fischeri (strain MJ11) (Vibrio fischeri).